The sequence spans 66 residues: Large ribosomal subunit protein uL29 (66 aa).

This sequence belongs to the universal ribosomal protein uL29 family.

The protein is Large ribosomal subunit protein uL29 of Helicobacter pylori (strain HPAG1).